The chain runs to 188 residues: ATP synthase subunit b 2 (188 aa).

Residues 1–23 are disordered; it reads MAEGHGDANGATAHTAADGGHKA. Over residues 8–18 the composition is skewed to low complexity; sequence ANGATAHTAAD. A helical transmembrane segment spans residues 37–57; the sequence is LVSLLIAFVALYLIVSKIALP.

This sequence belongs to the ATPase B chain family. In terms of assembly, F-type ATPases have 2 components, F(1) - the catalytic core - and F(0) - the membrane proton channel. F(1) has five subunits: alpha(3), beta(3), gamma(1), delta(1), epsilon(1). F(0) has three main subunits: a(1), b(2) and c(10-14). The alpha and beta chains form an alternating ring which encloses part of the gamma chain. F(1) is attached to F(0) by a central stalk formed by the gamma and epsilon chains, while a peripheral stalk is formed by the delta and b chains.

The protein resides in the cell inner membrane. F(1)F(0) ATP synthase produces ATP from ADP in the presence of a proton or sodium gradient. F-type ATPases consist of two structural domains, F(1) containing the extramembraneous catalytic core and F(0) containing the membrane proton channel, linked together by a central stalk and a peripheral stalk. During catalysis, ATP synthesis in the catalytic domain of F(1) is coupled via a rotary mechanism of the central stalk subunits to proton translocation. Functionally, component of the F(0) channel, it forms part of the peripheral stalk, linking F(1) to F(0). The b'-subunit is a diverged and duplicated form of b found in plants and photosynthetic bacteria. In Rhodopseudomonas palustris (strain BisB18), this protein is ATP synthase subunit b 2 (atpF2).